We begin with the raw amino-acid sequence, 468 residues long: UDP-N-acetylmuramoyl-L-alanine--L-glutamate ligase (468 aa).

122–128 (GTKGKST) contacts ATP.

This sequence belongs to the MurCDEF family. MurD2 subfamily.

The protein resides in the cytoplasm. It carries out the reaction UDP-N-acetyl-alpha-D-muramoyl-L-alanine + L-glutamate + ATP = UDP-N-acetyl-alpha-D-muramoyl-L-alanyl-L-glutamate + ADP + phosphate + H(+). It functions in the pathway cell wall biogenesis; peptidoglycan biosynthesis. Functionally, cell wall formation. Catalyzes the addition of L-glutamate to the nucleotide precursor UDP-N-acetylmuramoyl-L-alanine. The polypeptide is UDP-N-acetylmuramoyl-L-alanine--L-glutamate ligase (Xanthomonas campestris pv. campestris (strain 8004)).